A 698-amino-acid polypeptide reads, in one-letter code: Methionine--tRNA ligase (698 aa).

The 'HIGH' region motif lies at 18-28 (PYANGDLHVGH). Cys-149, Cys-152, Cys-161, and Cys-165 together coordinate Zn(2+). Position 350 (Thr-350) interacts with ATP. The disordered stretch occupies residues 567–590 (EAADAGDEEGEDEDEEPPAADLEP). Over residues 570 to 584 (DAGDEEGEDEDEEPP) the composition is skewed to acidic residues. Residues 600 to 698 (DFQDLDIRVA…EDAEPGTKVQ (99 aa)) enclose the tRNA-binding domain.

Belongs to the class-I aminoacyl-tRNA synthetase family. MetG type 1 subfamily. In terms of assembly, homodimer. Zn(2+) serves as cofactor.

The protein localises to the cytoplasm. The catalysed reaction is tRNA(Met) + L-methionine + ATP = L-methionyl-tRNA(Met) + AMP + diphosphate. Its function is as follows. Is required not only for elongation of protein synthesis but also for the initiation of all mRNA translation through initiator tRNA(fMet) aminoacylation. The sequence is that of Methionine--tRNA ligase from Natronomonas pharaonis (strain ATCC 35678 / DSM 2160 / CIP 103997 / JCM 8858 / NBRC 14720 / NCIMB 2260 / Gabara) (Halobacterium pharaonis).